The sequence spans 256 residues: 5-oxoprolinase subunit A (256 aa).

Belongs to the LamB/PxpA family. Forms a complex composed of PxpA, PxpB and PxpC.

The catalysed reaction is 5-oxo-L-proline + ATP + 2 H2O = L-glutamate + ADP + phosphate + H(+). Catalyzes the cleavage of 5-oxoproline to form L-glutamate coupled to the hydrolysis of ATP to ADP and inorganic phosphate. The protein is 5-oxoprolinase subunit A of Alkaliphilus metalliredigens (strain QYMF).